The chain runs to 407 residues: P2X receptor D (407 aa).

At Met-1–Leu-22 the chain is on the cytoplasmic side. The helical transmembrane segment at Gly-23–Ile-43 threads the bilayer. Residues Tyr-44–Asn-300 are Lumenal-facing. The tract at residues Arg-283–Ile-296 is pore-forming motif. The helical transmembrane segment at Phe-301–Leu-321 threads the bilayer. Residues Val-322 to Leu-407 lie on the Cytoplasmic side of the membrane. Residues Lys-371 to Asn-394 are disordered. The span at Asp-381–Asp-391 shows a compositional bias: acidic residues.

It belongs to the P2X receptor family.

The protein resides in the contractile vacuole membrane. In terms of biological role, P2X receptors are ligand-gated ion channels that play a role in intracellular calcium signaling. ATP does not evoke inward currents in p2xD. Not essential for osmoregulation. This Dictyostelium discoideum (Social amoeba) protein is P2X receptor D (p2xD).